The sequence spans 879 residues: Leucine--tRNA ligase (879 aa).

The 'HIGH' region signature appears at 46-56 (PYPSGALHMGH). The short motif at 638-642 (KMSKS) is the 'KMSKS' region element. K641 serves as a coordination point for ATP.

It belongs to the class-I aminoacyl-tRNA synthetase family.

It localises to the cytoplasm. The enzyme catalyses tRNA(Leu) + L-leucine + ATP = L-leucyl-tRNA(Leu) + AMP + diphosphate. This chain is Leucine--tRNA ligase, found in Xanthomonas campestris pv. campestris (strain 8004).